The sequence spans 742 residues: uncharacterized protein (742 aa).

A disordered region spans residues 1-102; that stretch reads MMLLKRSNDN…FTQTKPNNTD (102 aa). Over residues 18 to 28 the composition is skewed to low complexity; that stretch reads NRQNRQNNRQN. Over residues 48–57 the composition is skewed to basic and acidic residues; that stretch reads RDSSRMDPVD. Polar residues-rich tracts occupy residues 60–69 and 77–99; these read TLISFTSGKP and HDTG…TKPN.

This is an uncharacterized protein from Acanthamoeba polyphaga mimivirus (APMV).